The chain runs to 582 residues: MRAKVELAVLLLVLVGVAAGTRPPSAPPPVTEDTLQKVAGSLEMYVDELPQMPKIYGFSMRHGHPSPIRLTIGMYQKKWKFHRDLPASTVFVFGTSAATATFPGPTIEAAQGVPLSVTWQNYLPARHILPWDPTVPTAIPRRGGVPTVVHLHGGAHPPQSDGSAFAWFTAGFGETGPAWSTPTYTYPNAQSPGVLWYHDHALGLTRANLLAGLLGAYVIRNPAVEAPLGLPCGDEFDRVLMLADRSFYADGSIYMNYTGIIPNIHPQWQPEYFGEAITVNGKAWPFLAVARRRYRFRIINTSNARYFNLSLTNGLPFTVVGSDTNYLSKPVTAASLLVSVAETFDVVVDFSQSTSSEAELVNTAPYPYPDGQAPNDLNGKVMKFVISPAKAKDTSRVPAKLLDYVAVAEEEAVQRRYIVMYEYEDAATGNPTHLYINGKRLEDPATETPRPGTTEVWEVINLTPDNHPLHLHLATFQATRVRGLVDEDAFKGCMAKLNDAVRCNVSRHAVGEEVAVPEHEKGWKNVVKIAPGYMTTIVVKFFMVDSGKPYPFDATAEPGYVYHCHILDHEDNAMIRPLKLIK.

Residues 1–20 (MRAKVELAVLLLVLVGVAAG) form the signal peptide. His-150, His-152, His-198, and His-200 together coordinate Cu cation. 3 N-linked (GlcNAc...) asparagine glycosylation sites follow: Asn-256, Asn-300, and Asn-308. Positions 285–354 (PFLAVARRRY…DVVVDFSQST (70 aa)) constitute a Plastocyanin-like domain. The Cu cation site is built by His-467, His-470, and His-472. Asn-504 is a glycosylation site (N-linked (GlcNAc...) asparagine). Cu cation contacts are provided by His-563, Cys-564, His-565, His-569, and Met-574.

The protein belongs to the multicopper oxidase family. The cofactor is Cu cation. Highly expressed in roots, and at lower levels in basal stems and leaf blades.

It localises to the endoplasmic reticulum membrane. In terms of biological role, multicopper oxidase that may play a role in the maintenance of inorganic phosphate homeostasis. This Oryza sativa subsp. japonica (Rice) protein is Multicopper oxidase LPR1 homolog 1.